Reading from the N-terminus, the 637-residue chain is Sodium-dependent nutrient amino acid transporter 1 (637 aa).

The span at Met-1–His-17 shows a compositional bias: polar residues. The tract at residues Met-1–Arg-39 is disordered. Residues Met-1–Glu-47 are Cytoplasmic-facing. Residues Asp-26–Arg-39 are compositionally biased toward basic and acidic residues. 3 consecutive transmembrane segments (helical) span residues Phe-48 to Thr-68, Gly-75 to Leu-95, and Thr-128 to Val-148. Asn-181 and Asn-195 each carry an N-linked (GlcNAc...) asparagine glycan. A run of 9 helical transmembrane segments spans residues Pro-225–Met-245, Ala-254–Val-274, Ala-303–Ser-323, Ile-337–Leu-357, Leu-397–Leu-417, Ile-443–Leu-463, Thr-470–Leu-490, Phe-515–Ile-535, and Ala-549–Ile-569.

It belongs to the sodium:neurotransmitter symporter (SNF) (TC 2.A.22) family.

Its subcellular location is the membrane. In terms of biological role, unusual broad substrate spectrum amino acid:sodium cotransporter that promotes absorption of the D isomers of essential amino acids. Neutral amino acids are the preferred substrates, especially methionine and phenylalanine. In Drosophila virilis (Fruit fly), this protein is Sodium-dependent nutrient amino acid transporter 1.